Reading from the N-terminus, the 156-residue chain is Snaclec A6 (156 aa).

An N-terminal signal peptide occupies residues 1–23 (MGRSISVSFGLLVVFLSLSGTGA). 3 cysteine pairs are disulfide-bonded: Cys27–Cys38, Cys55–Cys154, and Cys129–Cys146. The C-type lectin domain occupies 34–155 (HEGHCYKVFN…CGKPYRFTCE (122 aa)).

It belongs to the snaclec family. Heterodimer; disulfide-linked. As to expression, expressed by the venom gland.

Its subcellular location is the secreted. Its function is as follows. Interferes with one step of hemostasis (modulation of platelet aggregation, or coagulation cascade, for example). The chain is Snaclec A6 from Macrovipera lebetinus (Levantine viper).